Here is an 836-residue protein sequence, read N- to C-terminus: Lon protease (836 aa).

Residues Leu41 to Val233 enclose the Lon N-terminal domain. Gly385–Thr392 contacts ATP. One can recognise a Lon proteolytic domain in the interval Val627 to Pro811. Active-site residues include Ser714 and Lys757. Positions Ala816 to Glu836 are disordered.

Belongs to the peptidase S16 family. In terms of assembly, homohexamer. Organized in a ring with a central cavity.

Its subcellular location is the cytoplasm. The enzyme catalyses Hydrolysis of proteins in presence of ATP.. In terms of biological role, ATP-dependent serine protease that mediates the selective degradation of mutant and abnormal proteins as well as certain short-lived regulatory proteins. Required for cellular homeostasis and for survival from DNA damage and developmental changes induced by stress. Degrades polypeptides processively to yield small peptide fragments that are 5 to 10 amino acids long. Binds to DNA in a double-stranded, site-specific manner. This chain is Lon protease, found in Chloroherpeton thalassium (strain ATCC 35110 / GB-78).